The sequence spans 677 residues: Forkhead box protein P1 (677 aa).

A compositionally biased stretch (polar residues) spans methionine 1–asparagine 18. Residues methionine 1–alanine 43 form a disordered region. Serine 83 bears the Phosphoserine mark. Polar residues predominate over residues isoleucine 270 to valine 283. Positions isoleucine 270–histidine 298 are disordered. The span at proline 286–histidine 298 shows a compositional bias: basic and acidic residues. Residue lysine 287 forms a Glycyl lysine isopeptide (Lys-Gly) (interchain with G-Cter in SUMO2) linkage. The C2H2-type zinc finger occupies glycine 306 to histidine 331. The leucine-zipper stretch occupies residues valine 348–leucine 369. Glycyl lysine isopeptide (Lys-Gly) (interchain with G-Cter in SUMO2) cross-links involve residues lysine 372 and lysine 377. Residues proline 382–valine 386 form a CTBP1-binding region. The span at threonine 390 to leucine 403 shows a compositional bias: polar residues. The interval threonine 390–serine 422 is disordered. Positions proline 404–threonine 418 are enriched in low complexity. A Glycyl lysine isopeptide (Lys-Gly) (interchain with G-Cter in SUMO2) cross-link involves residue lysine 442. The segment at residues arginine 465–leucine 555 is a DNA-binding region (fork-head). Positions glutamate 611–glutamate 677 are disordered. Over residues histidine 612–glycine 623 the composition is skewed to polar residues. Threonine 653 is subject to Phosphothreonine. Serine 658 is modified (phosphoserine). The segment covering tyrosine 667–glutamate 677 has biased composition (acidic residues).

Forms homodimers and heterodimers with FOXP2 and FOXP4. Dimerization is required for DNA-binding. Self-associates. Interacts with CTBP1. Interacts with NCOR2 and AR. Interacts with FOXP2. Interacts with TBR1. Interacts with AURKA; this interaction facilitates the phosphorylation of FOXP1, which suppresses the expression of FBXL7. Interacts with ZMYM2. In terms of tissue distribution, isoform 8 is specifically expressed in embryonic stem cells.

The protein resides in the nucleus. Transcriptional repressor. Can act with CTBP1 to synergistically repress transcription but CTPBP1 is not essential. Plays an important role in the specification and differentiation of lung epithelium. Acts cooperatively with FOXP4 to regulate lung secretory epithelial cell fate and regeneration by restricting the goblet cell lineage program; the function may involve regulation of AGR2. Essential transcriptional regulator of B-cell development. Involved in regulation of cardiac muscle cell proliferation. Involved in the columnar organization of spinal motor neurons. Promotes the formation of the lateral motor neuron column (LMC) and the preganglionic motor column (PGC) and is required for respective appropriate motor axon projections. The segment-appropriate generation of spinal cord motor columns requires cooperation with other Hox proteins. Can regulate PITX3 promoter activity; may promote midbrain identity in embryonic stem cell-derived dopamine neurons by regulating PITX3. Negatively regulates the differentiation of T follicular helper cells T(FH)s. Involved in maintenance of hair follicle stem cell quiescence; the function probably involves regulation of FGF18. Represses transcription of various pro-apoptotic genes and cooperates with NF-kappa B-signaling in promoting B-cell expansion by inhibition of caspase-dependent apoptosis. Binds to CSF1R promoter elements and is involved in regulation of monocyte differentiation and macrophage functions; repression of CSF1R in monocytes seems to involve NCOR2 as corepressor. Involved in endothelial cell proliferation, tube formation and migration indicative for a role in angiogenesis; the role in neovascularization seems to implicate suppression of SEMA5B. Can negatively regulate androgen receptor signaling. Acts as a transcriptional activator of the FBXL7 promoter; this activity is regulated by AURKA. In terms of biological role, involved in transcriptional regulation in embryonic stem cells (ESCs). Stimulates expression of transcription factors that are required for pluripotency and decreases expression of differentiation-associated genes. Has distinct DNA-binding specifities as compared to the canonical form and preferentially binds DNA with the sequence 5'-CGATACAA-3' (or closely related sequences). Promotes ESC self-renewal and pluripotency. This Homo sapiens (Human) protein is Forkhead box protein P1 (FOXP1).